The chain runs to 427 residues: Lipophilic envelope-spanning tunnel protein A (427 aa).

At 1–75 (MALNTPQITP…LTRLAAMAFT (75 aa)) the chain is on the cytoplasmic side. The chain crosses the membrane as a helical span at residues 76–96 (MLLLMPFAWGEPLLHIWLLGI). The Periplasmic segment spans residues 97–120 (RIDANVMQGIWQMTKQGDAITGSM). Residues 121–141 (VFFCVIGAPLILVTSIAYLWF) traverse the membrane as a helical segment. Residues 142-269 (GNRLGMNLRP…RHSLQKCWAA (128 aa)) are Cytoplasmic-facing. A helical membrane pass occupies residues 270–290 (LLASIVLLLPANLLPISIIYL). Residues 291–310 (NGGRQEDTILSGIMSLASSN) are Periplasmic-facing. Residues 311 to 331 (IAVAGIVFIASILVPFTKVIV) form a helical membrane-spanning segment. Residues 332-350 (MFTLLLSIHFKCQQGLRTR) are Cytoplasmic-facing. Residues 351–371 (ILLLRMVTWIGRWSMLDLFVI) form a helical membrane-spanning segment. Residues 372 to 382 (SLTMSLINRDQ) are Periplasmic-facing. Residues 383–403 (ILAFTMGPAAFYFGAAVILTI) traverse the membrane as a helical segment. The Cytoplasmic segment spans residues 404-427 (LAVEWLDSRLLWDAHESGNARFDD).

This sequence belongs to the PqiA family. As to quaternary structure, may interact with LetB in the inner membrane.

It is found in the cell inner membrane. Functionally, could be part, together with LetB, of a system that transports lipids between the inner membrane and the outer membrane. Contributes to membrane integrity. The sequence is that of Lipophilic envelope-spanning tunnel protein A from Escherichia coli (strain K12).